A 234-amino-acid polypeptide reads, in one-letter code: Sugar fermentation stimulation protein homolog (234 aa).

It belongs to the SfsA family.

The chain is Sugar fermentation stimulation protein homolog from Shewanella frigidimarina (strain NCIMB 400).